The primary structure comprises 669 residues: MTESKFHAKYDKIQAEFKTNGTEYAKMTTKSSSGSKTSTSASKSSKSTGSSNASKSSTNAHGSNSSTSSTSSSSSKSGKGNSGTSTTETITTPLLIDYKKFTPYKDAYQMSNNNFNLSINYGSGLLGYWAGILAIAIFANMIKKMFPSLTNNLSGSISNLFRKHLFLPATFRKKKAQEFSIGVYGFFDGLIPTRLETIIVVIFVVLTGLFSALHIHHVKDNPQYATKNAELGHLIADRTGILGTFLIPLLILFGGRNNFLQWLTGWDFATFIMYHRWISRVDVLLIIVHAITFSVSDKATGKYKNRMKRDFMIWGTVSTICGGFILFQAMLFFRRKCYEVFFLIHIVLVVFFVVGGYYHLESQGYGDFMWAAIAVWAFDRVVRLGRIFFFGARKATVSIKGDDTLKIEVPKPKYWKSVAGGHAFIHFLKPTLFLQSHPFTFTTTESNDKIVLYAKIKNGITSNIAKYLSPLPGNTATIRVLVEGPYGEPSSAGRNCKNVVFVAGGNGIPGIYSECVDLAKKSKNQSIKLIWIIRHWKSLSWFTEELEYLKKTNVQSTIYVTQPQDCSGLECFEHDVSFEKKSDEKDSVESSQYSLISNIKQGLSHVEFIEGRPDISTQVEQEVKQADGAIGFVTCGHPAMVDELRFAVTQNLNVSKHRVEYHEQLQTWA.

Positions 17–86 (FKTNGTEYAK…SGKGNSGTST (70 aa)) are disordered. N-linked (GlcNAc...) asparagine glycans are attached at residues N20, N52, N64, and N116. The span at 28–86 (TTKSSSGSKTSTSASKSSKSTGSSNASKSSTNAHGSNSSTSSTSSSSSKSGKGNSGTST) shows a compositional bias: low complexity. The helical transmembrane segment at 122–142 (GSGLLGYWAGILAIAIFANMI) threads the bilayer. Residue N152 is glycosylated (N-linked (GlcNAc...) asparagine). A run of 5 helical transmembrane segments spans residues 198 to 218 (IIVVIFVVLTGLFSALHIHHV), 234 to 254 (LIADRTGILGTFLIPLLILFG), 281 to 301 (VDVLLIIVHAITFSVSDKATG), 313 to 333 (IWGTVSTICGGFILFQAMLFF), and 340 to 360 (VFFLIHIVLVVFFVVGGYYHL). The Ferric oxidoreductase domain occupies 239 to 373 (TGILGTFLIP…GYGDFMWAAI (135 aa)). The FAD-binding FR-type domain occupies 374 to 492 (AVWAFDRVVR…EGPYGEPSSA (119 aa)). 437–442 (HPFTFT) contacts FAD. The chain crosses the membrane as a helical span at residues 499–519 (VVFVAGGNGIPGIYSECVDLA). N524 and N653 each carry an N-linked (GlcNAc...) asparagine glycan.

It belongs to the ferric reductase (FRE) family. Requires FAD as cofactor.

Its subcellular location is the membrane. The catalysed reaction is 2 a Fe(II)-siderophore + NAD(+) + H(+) = 2 a Fe(III)-siderophore + NADH. The protein is Probable ferric reductase transmembrane component (CFL1) of Candida albicans (Yeast).